The chain runs to 497 residues: E3 ubiquitin-protein ligase CBL-C (497 aa).

The 4H stretch occupies residues 7–145; sequence PQGWQWGEPR…SALFPEGKYC (139 aa). The 315-residue stretch at 7–321 folds into the Cbl-PTB domain; that stretch reads PQGWQWGEPR…GKNHNPDLTE (315 aa). The tract at residues 146-218 is EF-hand-like; that stretch reads GHLYQITKGS…FEFDIFTRLF (73 aa). Positions 199, 201, and 210 each coordinate Ca(2+). An SH2-like region spans residues 219 to 321; the sequence is QPWPTLLKNW…GKNHNPDLTE (103 aa). 4-O-phospho-L-tyrosine is bound at residue Arg-264. Residues 322 to 350 form a linker region; sequence LCRAVLNQCIQVSQEQLQLYQAMNSTFEL. Tyr-341 carries the phosphotyrosine; by SRC modification. The segment at 351-390 adopts an RING-type zinc-finger fold; it reads CKICTERDKDVRIEPCGHLLCSCCLAAWQHSDSQTCPFCR. The interval 351–497 is interaction with RET; that stretch reads CKICTERDKD…QVREGATESS (147 aa).

As to quaternary structure, interacts with Ubiquitin-conjugating enzyme E2 UBE2D2 and UBE2D3. Interacts with EGFR (tyrosine phosphorylated). Interacts with the SH3 domain proteins LYN and CRK. Interacts (via RING-type zinc finger) with TGFB1I1 (via LIM zinc-binding domain 2); the interaction is direct and enhances the E3 activity. Interacts directly with RET (inactive) and CD2AP; dissociates from RET upon RET activation by GDNF which also increases the interaction with CD2AP suggesting dissociation as CBLC:CD2AP complex. Interacts with SRC; the interaction is enhanced when SRC is phosphorylated at 'Tyr-419'. Post-translationally, phosphorylated on multiple tyrosine residues by SRC. Autoubiquitinated, when phosphorylated at Tyr-341.

The catalysed reaction is S-ubiquitinyl-[E2 ubiquitin-conjugating enzyme]-L-cysteine + [acceptor protein]-L-lysine = [E2 ubiquitin-conjugating enzyme]-L-cysteine + N(6)-ubiquitinyl-[acceptor protein]-L-lysine.. Phosphorylation at Tyr-341 is necessary and sufficient for the activation of E3 activity. Functionally, acts as an E3 ubiquitin-protein ligase, which accepts ubiquitin from specific E2 ubiquitin-conjugating enzymes, and then transfers it to substrates promoting their degradation by the proteasome. Functionally coupled with the E2 ubiquitin-protein ligases UB2D1, UB2D2 and UB2D3. Regulator of EGFR mediated signal transduction; upon EGF activation, ubiquitinates EGFR. Inhibits EGF stimulated MAPK1 activation. Promotes ubiquitination of SRC phosphorylated at 'Tyr-419', has the highest ubiquitin ligase activity among CBL family proteins. In collaboration with CD2AP may act as regulatory checkpoint for Ret signaling by modulating the rate of RET degradation after ligand activation; CD2AP converts it from an inhibitor to a promoter of RET degradation; the function limits the potency of GDNF on neuronal survival. In Rattus norvegicus (Rat), this protein is E3 ubiquitin-protein ligase CBL-C (Cblc).